A 362-amino-acid chain; its full sequence is Peptide chain release factor 1 (362 aa).

N5-methylglutamine is present on Q237.

Belongs to the prokaryotic/mitochondrial release factor family. Methylated by PrmC. Methylation increases the termination efficiency of RF1.

Its subcellular location is the cytoplasm. Peptide chain release factor 1 directs the termination of translation in response to the peptide chain termination codons UAG and UAA. The chain is Peptide chain release factor 1 (prfA) from Aquifex aeolicus (strain VF5).